The sequence spans 307 residues: MSDPSMTSDGATTHSGFVAIVGKPNVGKSTLLNSFLGTKVAPTSPRPQTTRRGVRGISTTDTHQIVFVDTPGLHKPKDALGKYMNHEVHSALADVDVIIWVVDLRHPPTDEDELVARQVRELPKPLFLVGNKTDAAKYPDEAMKLYRAQLEGRSAETSEIMLSAQNNPLQVATLREQILDILPENPFFYPRGAASDQSRETWAAEIIREEAMKKLREELPYAVATRVNRWTEREDGLQRIEGEIVVEKNAHKGMVIGSGGKQLREIGQAARKQLEVFLDRKVFLGLEVIVIPGWREDEEALRELGYE.

The 171-residue stretch at 14 to 184 folds into the Era-type G domain; the sequence is HSGFVAIVGK…REQILDILPE (171 aa). A G1 region spans residues 22 to 29; it reads GKPNVGKS. 22-29 is a GTP binding site; it reads GKPNVGKS. Residues 48 to 52 form a G2 region; that stretch reads QTTRR. Residues 69–72 form a G3 region; it reads DTPG. GTP is bound by residues 69–73 and 131–134; these read DTPGL and NKTD. A G4 region spans residues 131–134; that stretch reads NKTD. Residues 162–164 are G5; it reads LSA. A KH type-2 domain is found at 215–292; sequence LREELPYAVA…FLGLEVIVIP (78 aa).

This sequence belongs to the TRAFAC class TrmE-Era-EngA-EngB-Septin-like GTPase superfamily. Era GTPase family. Monomer.

The protein localises to the cytoplasm. It localises to the cell membrane. In terms of biological role, an essential GTPase that binds both GDP and GTP, with rapid nucleotide exchange. Plays a role in 16S rRNA processing and 30S ribosomal subunit biogenesis and possibly also in cell cycle regulation and energy metabolism. This is GTPase Era from Deinococcus deserti (strain DSM 17065 / CIP 109153 / LMG 22923 / VCD115).